Consider the following 280-residue polypeptide: Probable cell division protein WhiA (280 aa).

A DNA-binding region (H-T-H motif) is located at residues 247–279 (SLEQIANFFFTKYNIKISRSGIQHFSVNLKKLC).

It belongs to the WhiA family.

Functionally, involved in cell division and chromosome segregation. The sequence is that of Probable cell division protein WhiA from Mycoplasma genitalium (strain ATCC 33530 / DSM 19775 / NCTC 10195 / G37) (Mycoplasmoides genitalium).